Consider the following 572-residue polypeptide: Beta-fructofuranosidase, insoluble isoenzyme CWINV5 (572 aa).

A signal peptide spans 1-23; the sequence is MANIVWCNIAMFLLVSLFLTDDA. Substrate is bound by residues 54–57 and Gln73; that span reads WMND. Residue Asp57 is part of the active site. N-linked (GlcNAc...) asparagine glycosylation occurs at Asn84. 118 to 119 is a substrate binding site; it reads WS. Residues Asn152 and Asn179 are each glycosylated (N-linked (GlcNAc...) asparagine). Substrate contacts are provided by residues 184-185 and Glu239; that span reads RD. N-linked (GlcNAc...) asparagine glycosylation is found at Asn333 and Asn438. Cys434 and Cys481 form a disulfide bridge.

The protein belongs to the glycosyl hydrolase 32 family. As to expression, expressed in flowers, and, to a lower extent, in leaves.

The protein localises to the secreted. It localises to the extracellular space. The protein resides in the apoplast. It is found in the cell wall. The enzyme catalyses Hydrolysis of terminal non-reducing beta-D-fructofuranoside residues in beta-D-fructofuranosides.. This chain is Beta-fructofuranosidase, insoluble isoenzyme CWINV5 (CWINV5), found in Arabidopsis thaliana (Mouse-ear cress).